The primary structure comprises 473 residues: Sun domain-containing protein 1 (473 aa).

The segment at 1–47 (MALRHTISPQFSNRHSPPVTRSVSRTGVHQPLDTSTPVTRRDSQPGT) is disordered. The span at 7–47 (ISPQFSNRHSPPVTRSVSRTGVHQPLDTSTPVTRRDSQPGT) shows a compositional bias: polar residues. Coiled coils occupy residues 163-191 (ISNLRAEFSAHDKQLDFKTDHLEKLLENV) and 204-235 (EELKQIKLWQAEISDALQQMKKEIDDAKSTKI). A disordered region spans residues 237–257 (HSTPEKAPETAPTASLPPSSQ). Over residues 248-257 (PTASLPPSSQ) the composition is skewed to polar residues. The chain crosses the membrane as a helical span at residues 262–282 (HITRRALLGVNVANSLIGASI). The SUN domain occupies 279–443 (GASIDHSCSS…YLIRVYGEPV (165 aa)). Residues 443-473 (VDPPKETQPMTDNGTESKLESAIVNSVSETA) form a disordered region.

The protein resides in the nucleus membrane. It localises to the nucleus envelope. Functionally, involved in centrosome attachment to the nucleus. Required for zyg-12 localization to the nuclear envelope. Together with pot-1, it is required to anchor telomeres to the nuclear envelope in embryos. The sequence is that of Sun domain-containing protein 1 from Caenorhabditis elegans.